The primary structure comprises 375 residues: Peritrophin-48 (375 aa).

Residues 1 to 20 (MIIKTLLASVAIMLIATVNA) form the signal peptide. Chitin-binding type-2 domains lie at 25–83 (AKYC…NCIL), 86–143 (DNPC…SDDD), 153–210 (LNIC…MCER), 224–292 (ETLC…GCNR), and 294–360 (EYTT…ACQN). Residues Cys60 and Cys73 are joined by a disulfide bond. N-linked (GlcNAc...) asparagine glycosylation occurs at Asn117. Intrachain disulfides connect Cys120–Cys133, Cys187–Cys200, Cys265–Cys278, and Cys330–Cys343. A glycan (N-linked (GlcNAc...) asparagine) is linked at Asn360.

In terms of processing, glycosylated. In terms of tissue distribution, cardia and midgut peritrophic membrane.

In terms of biological role, may bind chitin or related oligosaccharide structures. The protein is Peritrophin-48 of Lucilia cuprina (Green bottle fly).